We begin with the raw amino-acid sequence, 48 residues long: Entericidin B (48 aa).

The N-terminal stretch at 1 to 21 is a signal peptide; it reads MVKKTIAAIFSVLVLSTVLTA. A lipid anchor (N-palmitoyl cysteine) is attached at Cys-22. Cys-22 carries S-diacylglycerol cysteine lipidation.

The protein belongs to the EcnA/EcnB lipoprotein family.

The protein resides in the cell membrane. Plays a role in the bacteriolysis. Is activated under conditions of high osmolarity by the factor sigma S. Entericidin A functions as an antidote. This is Entericidin B (ecnB) from Escherichia coli O157:H7.